The following is a 329-amino-acid chain: tRNA N6-adenosine threonylcarbamoyltransferase (329 aa).

Residues His-107 and His-111 each coordinate Fe cation. Residues 129–133 (LVSGG), Asp-162, Gly-175, and Asn-268 each bind substrate. Residue Asp-296 coordinates Fe cation.

It belongs to the KAE1 / TsaD family. Requires Fe(2+) as cofactor.

The protein localises to the cytoplasm. It carries out the reaction L-threonylcarbamoyladenylate + adenosine(37) in tRNA = N(6)-L-threonylcarbamoyladenosine(37) in tRNA + AMP + H(+). Functionally, required for the formation of a threonylcarbamoyl group on adenosine at position 37 (t(6)A37) in tRNAs that read codons beginning with adenine. Is involved in the transfer of the threonylcarbamoyl moiety of threonylcarbamoyl-AMP (TC-AMP) to the N6 group of A37, together with TsaE and TsaB. TsaD likely plays a direct catalytic role in this reaction. The chain is tRNA N6-adenosine threonylcarbamoyltransferase from Nitratiruptor sp. (strain SB155-2).